The chain runs to 314 residues: Tetraacyldisaccharide 4'-kinase (314 aa).

54–61 (YIGGTGKT) provides a ligand contact to ATP.

The protein belongs to the LpxK family.

The catalysed reaction is a lipid A disaccharide + ATP = a lipid IVA + ADP + H(+). It functions in the pathway glycolipid biosynthesis; lipid IV(A) biosynthesis; lipid IV(A) from (3R)-3-hydroxytetradecanoyl-[acyl-carrier-protein] and UDP-N-acetyl-alpha-D-glucosamine: step 6/6. In terms of biological role, transfers the gamma-phosphate of ATP to the 4'-position of a tetraacyldisaccharide 1-phosphate intermediate (termed DS-1-P) to form tetraacyldisaccharide 1,4'-bis-phosphate (lipid IVA). This chain is Tetraacyldisaccharide 4'-kinase, found in Pelagibacter ubique (strain HTCC1062).